The sequence spans 740 residues: Ribosomal protein S6 kinase alpha-3 (740 aa).

Positions 1-26 (MPLAQLADPWQKMAVESPSDSAENGQ) are disordered. The region spanning 68–327 (FELLKVLGQG…VEEIKRHSFF (260 aa)) is the Protein kinase 1 domain. Residues 74–82 (LGQGSFGKV) and lysine 100 each bind ATP. The active-site Proton acceptor is the aspartate 193. The residue at position 227 (serine 227) is a Phosphoserine; by PDPK1. The AGC-kinase C-terminal domain maps to 328-397 (STIDWNKLYR…VAITSDDESQ (70 aa)). Threonine 365 carries the phosphothreonine modification. Serine 369 and serine 375 each carry phosphoserine. Position 386 is a phosphoserine; by autocatalysis and MAPKAPK2 (serine 386). Serine 415 is subject to Phosphoserine. The 258-residue stretch at 422–679 (YEVKEDIGVG…AALVLRHPWI (258 aa)) folds into the Protein kinase 2 domain. ATP contacts are provided by residues 428–436 (IGVGSYSVC) and lysine 451. Position 529 is a phosphotyrosine; by FGFR3 (tyrosine 529). The Proton acceptor role is filled by aspartate 539. Phosphoserine is present on residues serine 556 and serine 715.

This sequence belongs to the protein kinase superfamily. AGC Ser/Thr protein kinase family. S6 kinase subfamily. As to quaternary structure, forms a complex with either MAPK1/ERK2 or MAPK3/ERK1 in quiescent cells. Transiently dissociates following mitogenic stimulation. Interacts with NFATC4, ETV1/ER81 and FGFR1. The cofactor is Mg(2+). Post-translationally, activated by phosphorylation at Ser-227 by PDPK1. Autophosphorylated on Ser-386, as part of the activation process. May be phosphorylated at Thr-365 and Ser-369 by MAPK1/ERK2 and MAPK3/ERK1. Can also be activated via phosphorylation at Ser-386 by MAPKAPK2. N-terminal myristoylation results in an activated kinase in the absence of added growth factors. As to expression, intestine, thymus, lung, heart and brain.

Its subcellular location is the nucleus. The protein resides in the cytoplasm. The catalysed reaction is L-seryl-[protein] + ATP = O-phospho-L-seryl-[protein] + ADP + H(+). It carries out the reaction L-threonyl-[protein] + ATP = O-phospho-L-threonyl-[protein] + ADP + H(+). With respect to regulation, upon extracellular signal or mitogen stimulation, phosphorylated at Thr-577 in the C-terminal kinase domain (CTKD) by MAPK1/ERK2 and MAPK3/ERK1. The activated CTKD then autophosphorylates Ser-386, allowing binding of PDPK1, which in turn phosphorylates Ser-227 in the N-terminal kinase domain (NTDK) leading to the full activation of the protein and subsequent phosphorylation of the substrates by the NTKD. Its function is as follows. Serine/threonine-protein kinase that acts downstream of ERK (MAPK1/ERK2 and MAPK3/ERK1) signaling and mediates mitogenic and stress-induced activation of the transcription factors CREB1, ETV1/ER81 and NR4A1/NUR77, regulates translation through RPS6 and EIF4B phosphorylation, and mediates cellular proliferation, survival, and differentiation by modulating mTOR signaling and repressing pro-apoptotic function of BAD and DAPK1. In fibroblast, is required for EGF-stimulated phosphorylation of CREB1 and histone H3 at 'Ser-10', which results in the subsequent transcriptional activation of several immediate-early genes. In response to mitogenic stimulation (EGF and PMA), phosphorylates and activates NR4A1/NUR77 and ETV1/ER81 transcription factors and the cofactor CREBBP. Upon insulin-derived signal, acts indirectly on the transcription regulation of several genes by phosphorylating GSK3B at 'Ser-9' and inhibiting its activity. Phosphorylates RPS6 in response to serum or EGF via an mTOR-independent mechanism and promotes translation initiation by facilitating assembly of the preinitiation complex. In response to insulin, phosphorylates EIF4B, enhancing EIF4B affinity for the EIF3 complex and stimulating cap-dependent translation. Is involved in the mTOR nutrient-sensing pathway by directly phosphorylating TSC2 at 'Ser-1798', which potently inhibits TSC2 ability to suppress mTOR signaling, and mediates phosphorylation of RPTOR, which regulates mTORC1 activity and may promote rapamycin-sensitive signaling independently of the PI3K/AKT pathway. Mediates cell survival by phosphorylating the pro-apoptotic proteins BAD and DAPK1 and suppressing their pro-apoptotic function. Promotes the survival of hepatic stellate cells by phosphorylating CEBPB in response to the hepatotoxin carbon tetrachloride (CCl4). Is involved in cell cycle regulation by phosphorylating the CDK inhibitor CDKN1B, which promotes CDKN1B association with 14-3-3 proteins and prevents its translocation to the nucleus and inhibition of G1 progression. In LPS-stimulated dendritic cells, is involved in TLR4-induced macropinocytosis, and in myeloma cells, acts as effector of FGFR3-mediated transformation signaling, after direct phosphorylation at Tyr-529 by FGFR3. Negatively regulates EGF-induced MAPK1/3 phosphorylation via phosphorylation of SOS1. Phosphorylates SOS1 at 'Ser-1134' and 'Ser-1161' that create YWHAB and YWHAE binding sites and which contribute to the negative regulation of MAPK1/3 phosphorylation. Phosphorylates EPHA2 at 'Ser-897', the RPS6KA-EPHA2 signaling pathway controls cell migration. Acts as a regulator of osteoblast differentiation by mediating phosphorylation of ATF4, thereby promoting ATF4 transactivation activity. The sequence is that of Ribosomal protein S6 kinase alpha-3 (Rps6ka3) from Mus musculus (Mouse).